A 115-amino-acid chain; its full sequence is NADH-ubiquinone oxidoreductase chain 3 (115 aa).

The next 3 membrane-spanning stretches (helical) occupy residues 3-23, 55-75, and 86-106; these read LVMA…IAFW, FFLV…LLPL, and TMLI…AYEW.

This sequence belongs to the complex I subunit 3 family. As to quaternary structure, core subunit of respiratory chain NADH dehydrogenase (Complex I) which is composed of 45 different subunits. Interacts with TMEM186. Interacts with TMEM242.

The protein localises to the mitochondrion inner membrane. It carries out the reaction a ubiquinone + NADH + 5 H(+)(in) = a ubiquinol + NAD(+) + 4 H(+)(out). In terms of biological role, core subunit of the mitochondrial membrane respiratory chain NADH dehydrogenase (Complex I) which catalyzes electron transfer from NADH through the respiratory chain, using ubiquinone as an electron acceptor. Essential for the catalytic activity of complex I. The protein is NADH-ubiquinone oxidoreductase chain 3 of Hippopotamus amphibius (Hippopotamus).